A 269-amino-acid polypeptide reads, in one-letter code: Phosphonoacetaldehyde hydrolase (269 aa).

D9 (nucleophile) is an active-site residue. Mg(2+) is bound by residues D9 and A11. Residue K50 is the Schiff-base intermediate with substrate of the active site. D184 provides a ligand contact to Mg(2+).

Belongs to the HAD-like hydrolase superfamily. PhnX family. Homodimer. The cofactor is Mg(2+).

It catalyses the reaction phosphonoacetaldehyde + H2O = acetaldehyde + phosphate + H(+). Involved in phosphonate degradation. This chain is Phosphonoacetaldehyde hydrolase, found in Lysinibacillus sphaericus (strain C3-41).